A 174-amino-acid chain; its full sequence is uncharacterized protein (174 aa).

2 consecutive transmembrane segments (helical) span residues 29 to 51 and 66 to 83; these read FAVELIPAINYFIFVGLCFGFWY and VIVIFGIPFFLTMLVTKI.

The protein localises to the cell membrane. This is an uncharacterized protein from Bacillus subtilis (strain 168).